Reading from the N-terminus, the 208-residue chain is Outer-membrane lipoprotein carrier protein (208 aa).

The first 22 residues, 1–22 (MLKPLSQLVCALPLVVAASSYA), serve as a signal peptide directing secretion.

It belongs to the LolA family. Monomer.

The protein resides in the periplasm. Participates in the translocation of lipoproteins from the inner membrane to the outer membrane. Only forms a complex with a lipoprotein if the residue after the N-terminal Cys is not an aspartate (The Asp acts as a targeting signal to indicate that the lipoprotein should stay in the inner membrane). In Shewanella loihica (strain ATCC BAA-1088 / PV-4), this protein is Outer-membrane lipoprotein carrier protein.